The chain runs to 474 residues: Ankyrin repeat, SAM and basic leucine zipper domain-containing protein 1 (474 aa).

The disordered stretch occupies residues 1–31; that stretch reads MAGRLRGPAVPGGGESSDSDEDGWDIGYTER. A phosphoserine mark is found at Ser16, Ser17, and Ser19. ANK repeat units follow at residues 43 to 72, 76 to 105, 108 to 142, 146 to 175, 179 to 208, and 212 to 241; these read EKDE…QVDS, FGWT…NASF, DQHT…SPNA, KRMS…EINA, NGYT…DKTL, and DGKT…PLHG. Residues 270–333 enclose the SAM domain; the sequence is SYSAFGDLEI…KIMDAVEELQ (64 aa).

As to quaternary structure, interacts with DDX4, PIWIL1, RANBP9 and TDRD1.

The protein resides in the cytoplasm. Plays a central role during spermatogenesis by repressing transposable elements and preventing their mobilization, which is essential for the germline integrity. Acts via the piRNA metabolic process, which mediates the repression of transposable elements during meiosis by forming complexes composed of piRNAs and Piwi proteins and governs the methylation and subsequent repression of transposons. Its association with pi-bodies suggests a participation in the primary piRNAs metabolic process. Required prior to the pachytene stage to facilitate the production of multiple types of piRNAs, including those associated with repeats involved in the regulation of retrotransposons. May act by mediating protein-protein interactions during germ cell maturation. This chain is Ankyrin repeat, SAM and basic leucine zipper domain-containing protein 1 (ASZ1), found in Ornithorhynchus anatinus (Duckbill platypus).